The primary structure comprises 214 residues: Probable nicotinate-nucleotide adenylyltransferase (214 aa).

Belongs to the NadD family.

It catalyses the reaction nicotinate beta-D-ribonucleotide + ATP + H(+) = deamido-NAD(+) + diphosphate. It functions in the pathway cofactor biosynthesis; NAD(+) biosynthesis; deamido-NAD(+) from nicotinate D-ribonucleotide: step 1/1. Catalyzes the reversible adenylation of nicotinate mononucleotide (NaMN) to nicotinic acid adenine dinucleotide (NaAD). The chain is Probable nicotinate-nucleotide adenylyltransferase from Pelodictyon phaeoclathratiforme (strain DSM 5477 / BU-1).